We begin with the raw amino-acid sequence, 224 residues long: UPF0758 protein RSc2444 (224 aa).

Residues 102-224 form the MPN domain; the sequence is TLESPQSVKD…VYSFLEHGKM (123 aa). Residues H173, H175, and D186 each contribute to the Zn(2+) site. The JAMM motif signature appears at 173–186; the sequence is HNHPTGHVEPSESD.

It belongs to the UPF0758 family.

The polypeptide is UPF0758 protein RSc2444 (Ralstonia nicotianae (strain ATCC BAA-1114 / GMI1000) (Ralstonia solanacearum)).